Here is a 453-residue protein sequence, read N- to C-terminus: Na(+)/H(+) antiporter NhaA 2 (453 aa).

11 consecutive transmembrane segments (helical) span residues Gly32–Ala52, Leu71–Leu91, Ala109–Ile129, Gly140–Gly160, Val169–Phe189, Asn193–Leu213, Ala232–Val252, Ala284–Val304, Pro310–Val330, Met356–Gly376, and His382–Leu402. Residues Gly409–Pro453 form a disordered region.

Belongs to the NhaA Na(+)/H(+) (TC 2.A.33) antiporter family.

Its subcellular location is the cell membrane. It carries out the reaction Na(+)(in) + 2 H(+)(out) = Na(+)(out) + 2 H(+)(in). Its function is as follows. Na(+)/H(+) antiporter that extrudes sodium in exchange for external protons. The protein is Na(+)/H(+) antiporter NhaA 2 of Salinispora tropica (strain ATCC BAA-916 / DSM 44818 / JCM 13857 / NBRC 105044 / CNB-440).